A 723-amino-acid polypeptide reads, in one-letter code: PX domain-containing protein EREL1 (723 aa).

Positions 1-12 are enriched in basic residues; it reads MMQRRSPPKHRH. Residues 1–26 are disordered; sequence MMQRRSPPKHRHDGTSPLPLGMDWSP. The PX domain maps to 48 to 165; it reads YCVTIPSWIV…SFLELEAAAR (118 aa). Disordered stretches follow at residues 169-193 and 209-230; these read QDVD…MVHP and YGSD…QDDI. Positions 172 to 193 are enriched in low complexity; that stretch reads DQNASDSNNDRSSTSSSPMVHP. A compositionally biased stretch (polar residues) spans 209–225; the sequence is YGSDTAYETSEVGSPSV. 2 coiled-coil regions span residues 401–474 and 503–555; these read NERL…LRQK and KHVL…LEKE. The tract at residues 698–723 is disordered; sequence DVKTTEDVNEENSDEKDEASRETLKR. A compositionally biased stretch (acidic residues) spans 704–714; that stretch reads DVNEENSDEKD.

Its subcellular location is the cytoplasm. The protein resides in the cytosol. It localises to the endosome membrane. Functionally, acts as an effector of RABF2A and RABF2B. Involved in vacuolar transport of storage proteins. Regulates membrane trafficking to protein storage vacuoles (PSVs). Binds specifically to phosphatidylinositol 3-monophosphate (PtdIns3P). The sequence is that of PX domain-containing protein EREL1 from Arabidopsis thaliana (Mouse-ear cress).